We begin with the raw amino-acid sequence, 121 residues long: Large ribosomal subunit protein eL8 (121 aa).

This sequence belongs to the eukaryotic ribosomal protein eL8 family. In terms of assembly, part of the 50S ribosomal subunit. Probably part of the RNase P complex.

The protein resides in the cytoplasm. Functionally, multifunctional RNA-binding protein that recognizes the K-turn motif in ribosomal RNA, the RNA component of RNase P, box H/ACA, box C/D and box C'/D' sRNAs. In Thermoplasma volcanium (strain ATCC 51530 / DSM 4299 / JCM 9571 / NBRC 15438 / GSS1), this protein is Large ribosomal subunit protein eL8.